The sequence spans 162 residues: Transcriptional repressor NrdR (162 aa).

The segment at 3–34 (CPYCHHTDSRVLESRSAEGGQSIRRRRECLAC) is a zinc-finger region. Positions 49–139 (ITVIKRNGDR…VYRQFQGISD (91 aa)) constitute an ATP-cone domain.

It belongs to the NrdR family. Requires Zn(2+) as cofactor.

In terms of biological role, negatively regulates transcription of bacterial ribonucleotide reductase nrd genes and operons by binding to NrdR-boxes. The protein is Transcriptional repressor NrdR of Thermosynechococcus vestitus (strain NIES-2133 / IAM M-273 / BP-1).